A 1215-amino-acid polypeptide reads, in one-letter code: DNA-directed RNA polymerase subunit beta' (1215 aa).

Residues cysteine 60, cysteine 62, cysteine 75, and cysteine 78 each contribute to the Zn(2+) site. Mg(2+) is bound by residues aspartate 450, aspartate 452, and aspartate 454. Zn(2+)-binding residues include cysteine 818, cysteine 892, cysteine 899, and cysteine 902.

It belongs to the RNA polymerase beta' chain family. The RNAP catalytic core consists of 2 alpha, 1 beta, 1 beta' and 1 omega subunit. When a sigma factor is associated with the core the holoenzyme is formed, which can initiate transcription. Mg(2+) serves as cofactor. It depends on Zn(2+) as a cofactor.

The catalysed reaction is RNA(n) + a ribonucleoside 5'-triphosphate = RNA(n+1) + diphosphate. In terms of biological role, DNA-dependent RNA polymerase catalyzes the transcription of DNA into RNA using the four ribonucleoside triphosphates as substrates. The chain is DNA-directed RNA polymerase subunit beta' from Streptococcus sanguinis (strain SK36).